A 416-amino-acid polypeptide reads, in one-letter code: NADH-quinone oxidoreductase subunit H (416 aa).

9 helical membrane passes run 16–36 (LILAKAVGVFVFLVLTVLAAI), 84–104 (PVYLLAPVISVIPAFLAFAVI), 124–144 (LAVAVLYILAVTSVGVYGIVL), 165–185 (VVSYEIAMALSFATVFLYAGT), 197–217 (STWYVFLLLPSFLVYVTSMVG), 260–280 (VSALATTMFLGGWHAPWPISL), 288–308 (WWPLLWFTAKVWVFLFVYIWL), 320–340 (FMAIGWKMLIPVSLAWIMIVA), and 353–373 (WASGLLIAGTVLTFGLAVILW).

The protein belongs to the complex I subunit 1 family. As to quaternary structure, NDH-1 is composed of 14 different subunits. Subunits NuoA, H, J, K, L, M, N constitute the membrane sector of the complex.

It is found in the cell membrane. It catalyses the reaction a quinone + NADH + 5 H(+)(in) = a quinol + NAD(+) + 4 H(+)(out). In terms of biological role, NDH-1 shuttles electrons from NADH, via FMN and iron-sulfur (Fe-S) centers, to quinones in the respiratory chain. The immediate electron acceptor for the enzyme in this species is believed to be menaquinone. Couples the redox reaction to proton translocation (for every two electrons transferred, four hydrogen ions are translocated across the cytoplasmic membrane), and thus conserves the redox energy in a proton gradient. This subunit may bind ubiquinone. In Mycobacterium sp. (strain KMS), this protein is NADH-quinone oxidoreductase subunit H.